We begin with the raw amino-acid sequence, 290 residues long: Protein CREG2 (290 aa).

The N-terminal stretch at 1-31 is a signal peptide; that stretch reads MSVRRGRRPARPGTRLSWLLCCSALLSPAAG. 2 N-linked (GlcNAc...) asparagine glycosylation sites follow: Asn165 and Asn166.

This sequence belongs to the CREG family. In terms of processing, it is not sure whether N-glycosylation is on Asn-165 and/or Asn-166. In terms of tissue distribution, brain specific mainly in the limbic system and faintly in the spinal cord but not in cerebellum.

It is found in the secreted. The chain is Protein CREG2 (CREG2) from Homo sapiens (Human).